The primary structure comprises 164 residues: Histone H3-like centromeric protein CENH3 (164 aa).

The span at 1–11 (MARTKHPAVRK) shows a compositional bias: basic residues. The disordered stretch occupies residues 1–71 (MARTKHPAVR…QRKPHRFRPG (71 aa)). K5 bears the N6,N6,N6-trimethyllysine; alternate mark. At K5 the chain carries N6,N6-dimethyllysine; alternate. N6-methyllysine; alternate occurs at positions 5, 19, and 30. A compositionally biased stretch (basic and acidic residues) spans 12-26 (SKAEPKKKLQFERSP). Position 19 is an N6-acetyllysine; alternate (K19). K30 is modified (N6,N6,N6-trimethyllysine; alternate). K30 carries the N6,N6-dimethyllysine; alternate modification. Low complexity predominate over residues 40–55 (TSATTRSAAGTSASGT). Basic residues predominate over residues 60 to 69 (TKQRKPHRFR).

It belongs to the histone H3 family.

It is found in the chromosome. The protein resides in the centromere. It localises to the kinetochore. Histone H3-like variant which exclusively replaces conventional H3 in the nucleosome core of centromeric chromatin at the inner plate of the kinetochore. Required for recruitment and assembly of kinetochore proteins, mitotic progression and chromosome segregation. This is Histone H3-like centromeric protein CENH3 from Oryza sativa subsp. japonica (Rice).